Consider the following 259-residue polypeptide: 4-hydroxy-tetrahydrodipicolinate reductase (259 aa).

NAD(+) contacts are provided by residues 8–13, 94–96, and 120–123; these read GFAGAM, GTT, and APNF. The Proton donor/acceptor role is filled by H150. H151 provides a ligand contact to (S)-2,3,4,5-tetrahydrodipicolinate. The Proton donor role is filled by K154. Residue 160–161 coordinates (S)-2,3,4,5-tetrahydrodipicolinate; the sequence is GT.

It belongs to the DapB family.

It is found in the cytoplasm. It carries out the reaction (S)-2,3,4,5-tetrahydrodipicolinate + NAD(+) + H2O = (2S,4S)-4-hydroxy-2,3,4,5-tetrahydrodipicolinate + NADH + H(+). It catalyses the reaction (S)-2,3,4,5-tetrahydrodipicolinate + NADP(+) + H2O = (2S,4S)-4-hydroxy-2,3,4,5-tetrahydrodipicolinate + NADPH + H(+). The protein operates within amino-acid biosynthesis; L-lysine biosynthesis via DAP pathway; (S)-tetrahydrodipicolinate from L-aspartate: step 4/4. Functionally, catalyzes the conversion of 4-hydroxy-tetrahydrodipicolinate (HTPA) to tetrahydrodipicolinate. The protein is 4-hydroxy-tetrahydrodipicolinate reductase of Limosilactobacillus fermentum (strain NBRC 3956 / LMG 18251) (Lactobacillus fermentum).